A 234-amino-acid chain; its full sequence is Kappa-casein (234 aa).

The first 21 residues, 1 to 21 (MMKSFLLVVNIVALTLPFLAA), serve as a signal peptide directing secretion. 3 tandem repeats follow at residues 127–153 (LGKA…QPTV), 154–179 (SAGD…EEAR), and 180–207 (ESPE…PRES). The tract at residues 127–207 (LGKATILSTD…AVPSEEPRES (81 aa)) is 3 X 27 AA tandem repeats. A disordered region spans residues 143 to 234 (QTPVSAAQPT…STGPAIASMA (92 aa)). O-linked (GalNAc...) threonine glycosylation occurs at threonine 144. Residues 144 to 171 (TPVSAAQPTVSAGDTPEVSSQFIDTPDT) are compositionally biased toward polar residues. Threonine 158 is modified (phosphothreonine). The residue at position 162 (serine 162) is a Phosphoserine; alternate. An O-linked (GalNAc...) serine; alternate glycan is attached at serine 162.

It belongs to the kappa-casein family. As to expression, mammary gland specific. Secreted in milk.

The protein resides in the secreted. In terms of biological role, kappa-casein stabilizes micelle formation, preventing casein precipitation in milk. This is Kappa-casein (CSN3) from Cavia porcellus (Guinea pig).